A 218-amino-acid chain; its full sequence is tRNA (guanine-N(7)-)-methyltransferase (218 aa).

Glu46, Glu71, Asp98, and Asp120 together coordinate S-adenosyl-L-methionine. Asp120 is an active-site residue. Lys124 is a substrate binding site. The tract at residues 126-131 is interaction with RNA; it reads RHEKRR. Residues Asp156 and 196–199 contribute to the substrate site; that span reads TEYE.

It belongs to the class I-like SAM-binding methyltransferase superfamily. TrmB family.

The enzyme catalyses guanosine(46) in tRNA + S-adenosyl-L-methionine = N(7)-methylguanosine(46) in tRNA + S-adenosyl-L-homocysteine. It functions in the pathway tRNA modification; N(7)-methylguanine-tRNA biosynthesis. In terms of biological role, catalyzes the formation of N(7)-methylguanine at position 46 (m7G46) in tRNA. The sequence is that of tRNA (guanine-N(7)-)-methyltransferase from Lactobacillus johnsonii (strain CNCM I-12250 / La1 / NCC 533).